The following is a 334-amino-acid chain: 6-phosphogluconolactonase (334 aa).

This sequence belongs to the cycloisomerase 2 family.

The enzyme catalyses 6-phospho-D-glucono-1,5-lactone + H2O = 6-phospho-D-gluconate + H(+). Its pathway is carbohydrate degradation; pentose phosphate pathway; D-ribulose 5-phosphate from D-glucose 6-phosphate (oxidative stage): step 2/3. Catalyzes the hydrolysis of 6-phosphogluconolactone to 6-phosphogluconate. This chain is 6-phosphogluconolactonase, found in Buchnera aphidicola subsp. Acyrthosiphon pisum (strain 5A).